The sequence spans 168 residues: MAEGSRIPQARALLQQCLHARLQIRPADGDVAAQWVEVQRGLVIYVCFFKGADKELLPKMVNTLLNVKLSETENGKHVSILDLPGNILIIPQATLGGRLKGRNMQYHSNSGKEEGFELYSQFVTLCEKEVAANSKCAEARVVVEHGTYGNRQVLKLDTNGPFTHLIEF.

A Gly-transPro motif, allows the protein to recognize chirality of D-amino acids motif is present at residues 160-161; sequence GP.

This sequence belongs to the DTD family. In terms of assembly, homodimer.

It localises to the cytoplasm. It catalyses the reaction a D-aminoacyl-tRNA + H2O = a tRNA + a D-alpha-amino acid + H(+). The enzyme catalyses glycyl-tRNA(Ala) + H2O = tRNA(Ala) + glycine + H(+). It carries out the reaction D-tyrosyl-tRNA(Tyr) + H2O = D-tyrosine + tRNA(Tyr). The catalysed reaction is L-alanyl-tRNA(Thr) + H2O = tRNA(Thr) + L-alanine + H(+). In terms of biological role, deacylates mischarged D-aminoacyl-tRNAs. Also deacylates mischarged glycyl-tRNA(Ala), protecting cells against glycine mischarging by AlaRS. Probably acts by rejecting L-amino acids from its binding site rather than specific recognition of D-amino acids. Catalyzes the hydrolysis of D-tyrosyl-tRNA(Tyr), has no activity on correctly charged L-tyrosyl-tRNA(Tyr). By recycling D-aminoacyl-tRNA to D-amino acids and free tRNA molecules, this enzyme counteracts the toxicity associated with the formation of D-aminoacyl-tRNA entities in vivo and helps enforce protein L-homochirality. In contrast to DTD1, deacylates L-Ala mischarged on tRNA(Thr)(G4.U69) by alanine-tRNA ligase AARS. Can deacylate L-Ala due to a relaxed specificity for substrate chirality caused by the trans conformation of the Gly-Pro motif in the active site. Also hydrolyzes correctly charged, achiral, glycyl-tRNA(Gly) in vitro, although in vivo EEF1A1/EF-Tu may protect cognate achiral glycyl-tRNA(Gly) from DTD2-mediated deacetylation. This is D-aminoacyl-tRNA deacylase 2 (DTD2) from Homo sapiens (Human).